Reading from the N-terminus, the 358-residue chain is F-box only protein 25 (358 aa).

The interaction with beta-actin stretch occupies residues 1–83 (MPFLGQDWRS…NDTNTQSFYR (83 aa)). Positions 226-274 (LTLSDLPLHMLNNILYRFSDGWDIITLGQVTPTLYMLSEDRQLWKKLCQ) constitute an F-box domain.

As to quaternary structure, part of a SCF (SKP1-cullin-F-box) protein ligase complex consisting of FBXO25, SKP1, CUL1 and RBX1. Interacts directly with SKP1 and CUL1. Interacts (via C-terminus) with beta-actin (via N-terminus).

The protein resides in the nucleus. The protein operates within protein modification; protein ubiquitination. Functionally, substrate-recognition component of the SCF (SKP1-CUL1-F-box protein)-type E3 ubiquitin ligase complex. May play a role in accumulation of expanded polyglutamine (polyQ) protein huntingtin (HTT). The polypeptide is F-box only protein 25 (FBXO25) (Macaca fascicularis (Crab-eating macaque)).